Here is an 832-residue protein sequence, read N- to C-terminus: Thymine dioxygenase JBP1-A (832 aa).

Residues Met-1–Met-12 are compositionally biased toward basic and acidic residues. Residues Met-1 to Lys-24 form a disordered region. A thymine dioxygenase region spans residues Val-80–Ala-282. Fe cation-binding residues include His-207, Asp-209, and His-257. Arg-273 contributes to the 2-oxoglutarate binding site. Positions Leu-409–Ser-578 are DNA-binding JBP1 domain.

It belongs to the TET family. JBP1 subfamily. In terms of assembly, monomer. Binds to DNA as a monomer. The cofactor is Fe(2+).

It localises to the nucleus. It catalyses the reaction thymine + 2-oxoglutarate + O2 = 5-hydroxymethyluracil + succinate + CO2. Functionally, dioxygenase that catalyzes the first step of DNA base J (beta-d-glucosyl-HOMedU) biosynthesis by converting thymine to 5-hydroxymethyluracil (HOMedU). DNA base J is a hypermodified thymidine residue found in the genome of kinetoplastid parasites, which is localized primarily to repetitive DNA, namely the telomeres, and is implicated in the regulation of antigenic variation. Also specifically binds to base J-containing DNA (J-DNA). Involved in propagation and maintenance of DNA base J synthesis initiated by JBP2 by specifically binding already synthesized DNA base J and propagating J synthesis. Thymine dioxygenase activity and J-DNA-binding are independent functions. This is Thymine dioxygenase JBP1-A (JBP1A) from Trypanosoma cruzi (strain CL Brener).